The following is a 577-amino-acid chain: Arginine--tRNA ligase (577 aa).

A 'HIGH' region motif is present at residues 122–132 (PNVAKEMHVGH).

It belongs to the class-I aminoacyl-tRNA synthetase family. In terms of assembly, monomer.

It is found in the cytoplasm. The enzyme catalyses tRNA(Arg) + L-arginine + ATP = L-arginyl-tRNA(Arg) + AMP + diphosphate. This is Arginine--tRNA ligase from Histophilus somni (strain 2336) (Haemophilus somnus).